Here is a 164-residue protein sequence, read N- to C-terminus: Lipoprotein signal peptidase (164 aa).

Helical transmembrane passes span 12–32 (WLWL…LILQ), 70–90 (WFFA…MYRS), and 102–122 (ALII…GFVV). Residues Asp-123 and Asp-141 contribute to the active site. The helical transmembrane segment at 137–157 (FNLADTAICVGAALIVLEGFL) threads the bilayer.

It belongs to the peptidase A8 family.

It localises to the cell inner membrane. The catalysed reaction is Release of signal peptides from bacterial membrane prolipoproteins. Hydrolyzes -Xaa-Yaa-Zaa-|-(S,diacylglyceryl)Cys-, in which Xaa is hydrophobic (preferably Leu), and Yaa (Ala or Ser) and Zaa (Gly or Ala) have small, neutral side chains.. The protein operates within protein modification; lipoprotein biosynthesis (signal peptide cleavage). In terms of biological role, this protein specifically catalyzes the removal of signal peptides from prolipoproteins. This chain is Lipoprotein signal peptidase, found in Shigella sonnei (strain Ss046).